The sequence spans 472 residues: Eukaryotic translation initiation factor 2 subunit 3 (472 aa).

A2 is subject to N-acetylalanine. The residue at position 16 (S16) is a Phosphoserine. The tr-type G domain occupies 39–248 (QATINIGTIG…IVKKIPVPPR (210 aa)). Positions 48 to 55 (GHVAHGKS) are G1. 51–56 (AHGKST) lines the GTP pocket. Residues 76 to 80 (NITIK) form a G2 region. Positions 134–137 (DCPG) are G3. GTP-binding positions include 190 to 193 (NKID) and 225 to 227 (SAQ). Residues 190–193 (NKID) form a G4 region. The interval 225 to 227 (SAQ) is G5. The tract at residues 457–469 (GQIRRGVTIKPTV) is interacts with CDC123.

It belongs to the TRAFAC class translation factor GTPase superfamily. Classic translation factor GTPase family. EIF2G subfamily. As to quaternary structure, eukaryotic translation initiation factor 2 eIF2 is a heterotrimeric complex composed of an alpha (EIF2S1), a beta (EIF2S2) and a gamma (EIF2S3) chain. eIF2 is member of the 43S pre-initiation complex (43S PIC). Interacts (via C-terminus) with CDC123; the interaction is direct.

The protein resides in the cytoplasm. Its subcellular location is the cytosol. It carries out the reaction GTP + H2O = GDP + phosphate + H(+). Member of the eIF2 complex that functions in the early steps of protein synthesis by forming a ternary complex with GTP and initiator tRNA. This complex binds to a 40S ribosomal subunit, followed by mRNA binding to form the 43S pre-initiation complex (43S PIC). Junction of the 60S ribosomal subunit to form the 80S initiation complex is preceded by hydrolysis of the GTP bound to eIF2 and release of an eIF2-GDP binary complex. In order for eIF2 to recycle and catalyze another round of initiation, the GDP bound to eIF2 must exchange with GTP by way of a reaction catalyzed by eIF-2B. The protein is Eukaryotic translation initiation factor 2 subunit 3 (EIF2S3) of Pongo abelii (Sumatran orangutan).